Here is a 110-residue protein sequence, read N- to C-terminus: Guanine nucleotide-binding protein subunit gamma (110 aa).

Cys-106 carries the S-palmitoyl cysteine lipid modification. The residue at position 107 (Cys-107) is a Cysteine methyl ester. Cys-107 carries S-farnesyl cysteine lipidation. Positions 108 to 110 are cleaved as a propeptide — removed in mature form; the sequence is TLM.

Belongs to the G protein gamma family. G proteins are composed of 3 units, alpha, beta and gamma. The beta-gamma subunit complex (STE4-STE18 complex) interacts with PLP1 and PLP2.

The protein localises to the membrane. Its function is as follows. Implicated in the pheromone A- and alpha-factor response pathway. The beta and gamma chains of the putative yeast mating response pathway G protein play a positive role in initiation of the mating response. This is Guanine nucleotide-binding protein subunit gamma (STE18) from Saccharomyces cerevisiae (strain ATCC 204508 / S288c) (Baker's yeast).